A 153-amino-acid chain; its full sequence is UPF0251 protein CT0950 (153 aa).

This sequence belongs to the UPF0251 family.

The protein is UPF0251 protein CT0950 of Chlorobaculum tepidum (strain ATCC 49652 / DSM 12025 / NBRC 103806 / TLS) (Chlorobium tepidum).